The chain runs to 309 residues: HPr kinase/phosphorylase (309 aa).

Active-site residues include H138 and K159. 153-160 (GQSGVGKS) contacts ATP. S160 contacts Mg(2+). D177 serves as the catalytic Proton acceptor; for phosphorylation activity. Proton donor; for dephosphorylation activity. The tract at residues 201–210 (LEIRGLGIIN) is important for the catalytic mechanism of both phosphorylation and dephosphorylation. A Mg(2+)-binding site is contributed by E202. Residue R243 is part of the active site. Positions 264–269 (PVRPGR) are important for the catalytic mechanism of dephosphorylation.

This sequence belongs to the HPrK/P family. In terms of assembly, homohexamer. It depends on Mg(2+) as a cofactor.

It catalyses the reaction [HPr protein]-L-serine + ATP = [HPr protein]-O-phospho-L-serine + ADP + H(+). It carries out the reaction [HPr protein]-O-phospho-L-serine + phosphate + H(+) = [HPr protein]-L-serine + diphosphate. Its function is as follows. Catalyzes the ATP- as well as the pyrophosphate-dependent phosphorylation of a specific serine residue in HPr, a phosphocarrier protein of the phosphoenolpyruvate-dependent sugar phosphotransferase system (PTS). HprK/P also catalyzes the pyrophosphate-producing, inorganic phosphate-dependent dephosphorylation (phosphorolysis) of seryl-phosphorylated HPr (P-Ser-HPr). The two antagonistic activities of HprK/P are regulated by several intracellular metabolites, which change their concentration in response to the absence or presence of rapidly metabolisable carbon sources (glucose, fructose, etc.) in the growth medium. Also phosphorylates/dephosphorylates the HPr-like catabolite repression protein crh on a specific serine residue. Therefore, by controlling the phosphorylation state of HPr and crh, HPrK/P is a sensor enzyme that plays a major role in the regulation of carbon metabolism and sugar transport: it mediates carbon catabolite repression (CCR), and regulates PTS-catalyzed carbohydrate uptake and inducer exclusion. The protein is HPr kinase/phosphorylase of Bacillus cereus (strain AH820).